Here is a 258-residue protein sequence, read N- to C-terminus: Hydroxyacylglutathione hydrolase (258 aa).

The Zn(2+) site is built by His52, His54, Asp56, His57, His109, Asp126, and His164.

It belongs to the metallo-beta-lactamase superfamily. Glyoxalase II family. In terms of assembly, monomer. Zn(2+) is required as a cofactor.

It catalyses the reaction an S-(2-hydroxyacyl)glutathione + H2O = a 2-hydroxy carboxylate + glutathione + H(+). It functions in the pathway secondary metabolite metabolism; methylglyoxal degradation; (R)-lactate from methylglyoxal: step 2/2. In terms of biological role, thiolesterase that catalyzes the hydrolysis of S-D-lactoyl-glutathione to form glutathione and D-lactic acid. The protein is Hydroxyacylglutathione hydrolase of Xylella fastidiosa (strain M12).